The chain runs to 83 residues: Small ribosomal subunit protein uS17 (83 aa).

It belongs to the universal ribosomal protein uS17 family. In terms of assembly, part of the 30S ribosomal subunit.

One of the primary rRNA binding proteins, it binds specifically to the 5'-end of 16S ribosomal RNA. The sequence is that of Small ribosomal subunit protein uS17 from Francisella tularensis subsp. tularensis (strain FSC 198).